The sequence spans 307 residues: Protoheme IX farnesyltransferase (307 aa).

9 helical membrane-spanning segments follow: residues 31–51 (VMSL…YSVH), 52–72 (PFIA…AGAI), 102–119 (ALSF…FMAL), 123–145 (LLAS…IWLK), 151–171 (NIVI…AAVS), 179–199 (VILF…LALF), 225–245 (ILIY…IGMS), 247–267 (FIYL…AGSL), and 281–301 (FVYS…TNTI).

Belongs to the UbiA prenyltransferase family. Protoheme IX farnesyltransferase subfamily.

It localises to the cell inner membrane. It catalyses the reaction heme b + (2E,6E)-farnesyl diphosphate + H2O = Fe(II)-heme o + diphosphate. Its pathway is porphyrin-containing compound metabolism; heme O biosynthesis; heme O from protoheme: step 1/1. Its function is as follows. Converts heme B (protoheme IX) to heme O by substitution of the vinyl group on carbon 2 of heme B porphyrin ring with a hydroxyethyl farnesyl side group. In Rickettsia canadensis (strain McKiel), this protein is Protoheme IX farnesyltransferase.